The following is a 970-amino-acid chain: Transposase for insertion sequence element IS1071 in transposon Tn5271 (970 aa).

Belongs to the transposase 7 family.

Its function is as follows. Required for transposition of transposon Tn5271. The sequence is that of Transposase for insertion sequence element IS1071 in transposon Tn5271 from Comamonas testosteroni (Pseudomonas testosteroni).